The chain runs to 80 residues: U6 snRNA-associated Sm-like protein LSm6 (80 aa).

In terms of domain architecture, Sm spans 7-79; that stretch reads TPSDFLKQII…VLYISTQKRR (73 aa). Lys59 bears the N6-acetyllysine mark.

Belongs to the snRNP Sm proteins family. SmF/LSm6 subfamily. As to quaternary structure, component of the precatalytic spliceosome (spliceosome B complex). Component of the U4/U6-U5 tri-snRNP complex, a building block of the precatalytic spliceosome (spliceosome B complex). The U4/U6-U5 tri-snRNP complex is composed of the U4, U6 and U5 snRNAs and at least PRPF3, PRPF4, PRPF6, PRPF8, PRPF31, SNRNP200, TXNL4A, SNRNP40, SNRPB, SNRPD1, SNRPD2, SNRPD3, SNRPE, SNRPF, SNRPG, DDX23, CD2BP2, PPIH, SNU13, EFTUD2, SART1 and USP39, plus LSM2, LSM3, LSM4, LSM5, LSM6, LSM7 and LSM8. LSM2, LSM3, LSM4, LSM5, LSM6, LSM7 and LSM8 form a heptameric, ring-shaped subcomplex (the LSM2-8 complex) that is part of the U4/U6-U5 tri-snRNP complex and the precatalytic spliceosome. Component of the heptameric LSM1-LSM7 complex, which consists of LSM1, LSM2, LSM3, LSM4, LSM5, LSM6 and LSM7.

Its subcellular location is the cytoplasm. The protein localises to the nucleus. In terms of biological role, plays a role in pre-mRNA splicing as component of the U4/U6-U5 tri-snRNP complex that is involved in spliceosome assembly, and as component of the precatalytic spliceosome (spliceosome B complex). The heptameric LSM2-8 complex binds specifically to the 3'-terminal U-tract of U6 snRNA. Component of LSm protein complexes, which are involved in RNA processing and may function in a chaperone-like manner, facilitating the efficient association of RNA processing factors with their substrates. Component of the cytoplasmic LSM1-LSM7 complex, which is thought to be involved in mRNA degradation by activating the decapping step in the 5'-to-3' mRNA decay pathway. This is U6 snRNA-associated Sm-like protein LSm6 (LSM6) from Homo sapiens (Human).